The sequence spans 411 residues: Kelch domain-containing protein 10 (411 aa).

Kelch repeat units follow at residues Asn-72–His-133, Leu-135–Gly-186, Phe-187–Gln-239, Arg-240–His-288, Glu-296–Pro-342, and Cys-345–Gln-388.

This sequence belongs to the KLHDC10 family. In terms of assembly, component of a CRL2 E3 ubiquitin-protein ligase complex, also named ECS (Elongin BC-CUL2/5-SOCS-box protein) complex, composed of CUL2, Elongin BC (ELOB and ELOC), RBX1 and substrate-specific adapter KLHDC10.

The protein operates within protein modification; protein ubiquitination. Its function is as follows. Substrate-recognition component of a Cul2-RING (CRL2) E3 ubiquitin-protein ligase complex of the DesCEND (destruction via C-end degrons) pathway, which recognizes a C-degron located at the extreme C terminus of target proteins, leading to their ubiquitination and degradation. The C-degron recognized by the DesCEND pathway is usually a motif of less than ten residues and can be present in full-length proteins, truncated proteins or proteolytically cleaved forms. The CRL2(KLHDC10) complex specifically recognizes proteins with a proline-glycine (Pro-Gly) or an alanine tail (CAT tail) at the C-terminus, leading to their ubiquitination and degradation. The CRL2(KLHDC10) complex is involved in the ribosome-associated quality control (RQC) pathway, which mediates the extraction of incompletely synthesized nascent chains from stalled ribosomes: CRL2(KLHDC10) acts downstream of NEMF and recognizes CAT tails associated with stalled nascent chains, leading to their ubiquitination and degradation. In Xenopus laevis (African clawed frog), this protein is Kelch domain-containing protein 10.